Consider the following 143-residue polypeptide: Transcriptional regulator MraZ (143 aa).

SpoVT-AbrB domains follow at residues 5 to 47 (EYEH…TLEE) and 76 to 119 (AVEV…DRET).

The protein belongs to the MraZ family. In terms of assembly, forms oligomers.

The protein localises to the cytoplasm. The protein resides in the nucleoid. The protein is Transcriptional regulator MraZ of Staphylococcus saprophyticus subsp. saprophyticus (strain ATCC 15305 / DSM 20229 / NCIMB 8711 / NCTC 7292 / S-41).